The chain runs to 37 residues: Ferredoxin--NADP reductase, chloroplastic (37 aa).

Residues serine 3 and 24–25 (SR) each bind NADP(+).

Belongs to the ferredoxin--NADP reductase type 1 family. FAD is required as a cofactor.

It is found in the plastid. The protein resides in the chloroplast stroma. Its subcellular location is the chloroplast thylakoid membrane. It carries out the reaction 2 reduced [2Fe-2S]-[ferredoxin] + NADP(+) + H(+) = 2 oxidized [2Fe-2S]-[ferredoxin] + NADPH. It participates in energy metabolism; photosynthesis. May play a key role in regulating the relative amounts of cyclic and non-cyclic electron flow to meet the demands of the plant for ATP and reducing power. The sequence is that of Ferredoxin--NADP reductase, chloroplastic from Imperata cylindrica (Cogon grass).